An 806-amino-acid polypeptide reads, in one-letter code: Leucine--tRNA ligase (806 aa).

The short motif at 40 to 51 (PYPSGAGLHVGH) is the 'HIGH' region element. Residues 578–582 (KMSKS) carry the 'KMSKS' region motif. Residue lysine 581 coordinates ATP.

The protein belongs to the class-I aminoacyl-tRNA synthetase family.

It is found in the cytoplasm. It catalyses the reaction tRNA(Leu) + L-leucine + ATP = L-leucyl-tRNA(Leu) + AMP + diphosphate. In Staphylococcus aureus (strain MSSA476), this protein is Leucine--tRNA ligase.